The sequence spans 645 residues: 1-deoxy-D-xylulose-5-phosphate synthase 2 (645 aa).

Thiamine diphosphate contacts are provided by residues H79 and G120–S122. Residue D151 participates in Mg(2+) binding. Thiamine diphosphate-binding positions include G152–S153, N180, Y291, and E373. Residue N180 coordinates Mg(2+).

It belongs to the transketolase family. DXPS subfamily. In terms of assembly, homodimer. The cofactor is Mg(2+). It depends on thiamine diphosphate as a cofactor.

The enzyme catalyses D-glyceraldehyde 3-phosphate + pyruvate + H(+) = 1-deoxy-D-xylulose 5-phosphate + CO2. It participates in metabolic intermediate biosynthesis; 1-deoxy-D-xylulose 5-phosphate biosynthesis; 1-deoxy-D-xylulose 5-phosphate from D-glyceraldehyde 3-phosphate and pyruvate: step 1/1. In terms of biological role, catalyzes the acyloin condensation reaction between C atoms 2 and 3 of pyruvate and glyceraldehyde 3-phosphate to yield 1-deoxy-D-xylulose-5-phosphate (DXP). The polypeptide is 1-deoxy-D-xylulose-5-phosphate synthase 2 (Rhodospirillum rubrum (strain ATCC 11170 / ATH 1.1.1 / DSM 467 / LMG 4362 / NCIMB 8255 / S1)).